The chain runs to 2424 residues: Voltage-dependent P/Q-type calcium channel subunit alpha-1A (2424 aa).

The Cytoplasmic portion of the chain corresponds to 1–98; the sequence is MARFGDEMPA…KYAKKITEWP (98 aa). One copy of the I repeat lies at 85-363; it reads NVVRKYAKKI…LVLGVLSGEF (279 aa). The chain crosses the membrane as a helical span at residues 99–117; it reads PFEYMILATIIANCIVLAL. Over 118-135 the chain is Extracellular; sequence EQHLPDDDKTPMSERLDD. A helical membrane pass occupies residues 136-155; it reads TEPYFIGIFCFEAGIKIIAL. Residues 156 to 167 lie on the Cytoplasmic side of the membrane; it reads GFAFHKGSYLRN. Residues 168-185 traverse the membrane as a helical segment; sequence GWNVMDFVVVLTGILATV. Topologically, residues 186–190 are extracellular; that stretch reads GTEFD. The chain crosses the membrane as a helical span at residues 191-209; sequence LRTLRAVRVLRPLKLVSGI. At 210-228 the chain is on the cytoplasmic side; sequence PSLQVVLKSIMKAMIPLLQ. A helical transmembrane segment spans residues 229-248; the sequence is IGLLLFFAILIFAIIGLEFY. The Extracellular segment spans residues 249 to 335; sequence MGKFHTTCFE…NSNDASGNTW (87 aa). The N-linked (GlcNAc...) asparagine glycan is linked to Asn-283. Position 318 (Glu-318) interacts with Ca(2+). The helical transmembrane segment at 336 to 360 threads the bilayer; the sequence is NWLYFIPLIIIGSFFMLNLVLGVLS. Residues 361–487 lie on the Cytoplasmic side of the membrane; it reads GEFAKERERV…FYIRRMVKTQ (127 aa). A binding to the beta subunit region spans residues 383–400; the sequence is QQIERELNGYMEWISKAE. Thr-409 is modified (phosphothreonine). A phosphoserine mark is found at Ser-448 and Ser-451. One copy of the II repeat lies at 473–717; the sequence is ERRMRFYIRR…VFLAIAVDNL (245 aa). The chain crosses the membrane as a helical span at residues 488 to 506; that stretch reads AFYWTVLSLVALNTLCVAI. Residues 507–521 lie on the Extracellular side of the membrane; it reads VHYNQPEWLSDFLYY. The chain crosses the membrane as a helical span at residues 522 to 541; it reads AEFIFLGLFMSEMFIKMYGL. The Cytoplasmic segment spans residues 542–549; that stretch reads GTRPYFHS. Residues 550-568 form a helical membrane-spanning segment; that stretch reads SFNCFDCGVIIGSIFEVIW. Residues 569 to 578 are Extracellular-facing; sequence AVIKPGTSFG. A helical membrane pass occupies residues 579 to 597; the sequence is ISVLRALRLLRIFKVTKYW. Residues 598–616 lie on the Cytoplasmic side of the membrane; the sequence is ASLRNLVVSLLNSMKSIIS. A helical transmembrane segment spans residues 617–636; sequence LLFLLFLFIVVFALLGMQLF. The Extracellular segment spans residues 637–689; it reads GGQFNFDEGTPPTNFDTFPAAIMTVFQILTGEDWNEVMYDGIKSQGGVQGGMV. Position 668 (Glu-668) interacts with Ca(2+). A helical transmembrane segment spans residues 690-714; sequence FSIYFIVLTLFGNYTLLNVFLAIAV. Topologically, residues 715–1253 are cytoplasmic; sequence DNLANAQELT…RLCHYILNLR (539 aa). A phosphoserine mark is found at Ser-750, Ser-753, and Ser-790. Residues 819–1229 form a disordered region; it reads HLDRPLVVDP…GEDGPKPMPP (411 aa). Basic and acidic residues-rich tracts occupy residues 893–912, 922–931, and 969–996; these read ELSR…REGG, EAERGKAGDP, and RPGE…RSGE. A compositionally biased stretch (polar residues) spans 1053–1065; it reads PNLSTTRPIQQDL. Phosphoserine is present on residues Ser-1091 and Ser-1104. Residues 1110 to 1140 show a composition bias toward low complexity; the sequence is SSTDPAGPTPATAANPQNSTASRRTPNNPGN. A compositionally biased stretch (polar residues) spans 1151–1168; it reads ENSLIVTNPSTAQTNSAK. A compositionally biased stretch (basic and acidic residues) spans 1204 to 1214; the sequence is LPKKEDEKKEE. The III repeat unit spans residues 1240–1523; the sequence is NPLRRLCHYI…IFVALIIITF (284 aa). Residues 1254-1272 form a helical membrane-spanning segment; sequence YFEMCILMVIAMSSIALAA. The Extracellular portion of the chain corresponds to 1273–1288; sequence EDPVQPNAPRNNVLRY. A helical membrane pass occupies residues 1289 to 1308; that stretch reads FDYVFTGVFTFEMVIKMIDL. The Cytoplasmic segment spans residues 1309–1320; sequence GLVLHQGAYFRD. A helical membrane pass occupies residues 1321-1339; sequence LWNILDFIVVSGALVAFAF. Residues 1340–1350 are Extracellular-facing; that stretch reads TGNSKGKDINT. The helical transmembrane segment at 1351–1369 threads the bilayer; the sequence is IKSLRVLRVLRPLKTIKRL. Residues 1370 to 1388 are Cytoplasmic-facing; it reads PKLKAVFDCVVNSLKNVFN. Residues 1389–1408 form a helical membrane-spanning segment; that stretch reads ILIVYMLFMFIFAVVAVQLF. The Extracellular portion of the chain corresponds to 1409–1495; sequence KGKFFHCTDE…QGPSPGYRME (87 aa). Glu-1469 serves as a coordination point for Ca(2+). Residues 1496–1520 traverse the membrane as a helical segment; the sequence is MSIFYVVYFVVFPFFFVNIFVALII. The Cytoplasmic segment spans residues 1521–1575; sequence ITFQEQGDKMMEEYSLEKNERACIDFAISAKPLTRHMPQNKQSFQYRMWQFVVSP. One copy of the IV repeat lies at 1560 to 1823; the sequence is NKQSFQYRMW…LFVAVIMDNF (264 aa). A helical transmembrane segment spans residues 1576–1604; it reads PFEYTIMAMIALNTIVLMMKFYGASVAYD. The Extracellular portion of the chain corresponds to 1605-1609; sequence NALKV. Residues 1610–1629 traverse the membrane as a helical segment; it reads FNIVFTSLFSLECLLKVLAF. Residues 1630-1637 are Cytoplasmic-facing; the sequence is GILNYFRD. Residues 1638 to 1656 form a helical membrane-spanning segment; it reads AWNIFDFVTVLGSITDILV. Residues 1657 to 1665 lie on the Extracellular side of the membrane; that stretch reads TEFGNNFIN. The N-linked (GlcNAc...) asparagine glycan is linked to Asn-1665. A helical transmembrane segment spans residues 1666-1684; that stretch reads LSFLRLFRAARLIKLLRQG. The Cytoplasmic portion of the chain corresponds to 1685–1703; the sequence is YTIRILLWTFVQSFKALPY. Residues 1704–1723 form a helical membrane-spanning segment; that stretch reads VCLLIAMLFFIYAIIGMQVF. The Extracellular portion of the chain corresponds to 1724-1795; the sequence is GNIGIDMEDE…ILTPECGNEF (72 aa). A helical transmembrane segment spans residues 1796 to 1820; sequence AYFYFVSFIFLCSFLMLNLFVAVIM. Residues 1821-2424 are Cytoplasmic-facing; that stretch reads DNFEYLTRDS…GGPRASAPSP (604 aa). A Phosphothreonine modification is found at Thr-1993. The segment at 1997 to 2424 is disordered; it reads FQRMEPPPDE…GGPRASAPSP (428 aa). Polar residues predominate over residues 2037–2053; that stretch reads SWVTQRAQEMFQKTGTW. Phosphoserine occurs at positions 2054, 2072, 2084, 2086, 2127, and 2148. A compositionally biased stretch (basic and acidic residues) spans 2074–2090; that stretch reads EMREMSQDGYSDSEHCL. Basic and acidic residues-rich tracts occupy residues 2142–2159 and 2200–2210; these read RRLD…ENQR and PSREREQERGR. Over residues 2211-2229 the composition is skewed to basic residues; that stretch reads PKDRKHRPHHHHHHHHHPG. Residues 2249 to 2262 are compositionally biased toward low complexity; sequence VARVRPARAPALAH. Residues 2280–2305 show a composition bias toward basic residues; that stretch reads RRARRPRPRQRRRPRRRRGGGGRALR.

This sequence belongs to the calcium channel alpha-1 subunit (TC 1.A.1.11) family. CACNA1A subfamily. In terms of assembly, voltage-dependent calcium channels are multisubunit complexes, consisting of alpha-1, alpha-2, beta and delta subunits in a 1:1:1:1 ratio. The channel activity is directed by the pore-forming and voltage-sensitive alpha-1 subunit. In many cases, this subunit is sufficient to generate voltage-sensitive calcium channel activity. The auxiliary subunits beta and alpha-2/delta linked by a disulfide bridge regulate the channel activity. Interacts with CABP1. Interacts with the spider omega-agatoxin-IVA (AC P30288). Interacts with TSPOAP1. Brain specific. Purkinje cells contain predominantly P-type VSCC, the Q-type being a prominent calcium current in cerebellar granule cells.

The protein localises to the cell membrane. The enzyme catalyses Ca(2+)(in) = Ca(2+)(out). In terms of biological role, voltage-sensitive calcium channels (VSCC) mediate the entry of calcium ions into excitable cells and are also involved in a variety of calcium-dependent processes, including muscle contraction, hormone or neurotransmitter release, gene expression, cell motility, cell division and cell death. The isoform alpha-1A gives rise to P and/or Q-type calcium currents. P/Q-type calcium channels belong to the 'high-voltage activated' (HVA) group and are specifically blocked by the spider omega-agatoxin-IVA (AC P54282). They are however insensitive to dihydropyridines (DHP). This chain is Voltage-dependent P/Q-type calcium channel subunit alpha-1A (CACNA1A), found in Oryctolagus cuniculus (Rabbit).